A 301-amino-acid polypeptide reads, in one-letter code: uncharacterized protein (301 aa).

Thr-47 serves as the catalytic Charge relay system. Residue Tyr-136 is the Proton donor of the active site. The active-site Schiff-base intermediate with substrate is Lys-165.

This sequence belongs to the DapA family. As to quaternary structure, homotetramer.

Its subcellular location is the cytoplasm. This is an uncharacterized protein from Thermofilum pendens (strain DSM 2475 / Hrk 5).